The sequence spans 136 residues: Large ribosomal subunit protein uL16 (136 aa).

It belongs to the universal ribosomal protein uL16 family. As to quaternary structure, part of the 50S ribosomal subunit.

Its function is as follows. Binds 23S rRNA and is also seen to make contacts with the A and possibly P site tRNAs. This Vibrio vulnificus (strain YJ016) protein is Large ribosomal subunit protein uL16.